Reading from the N-terminus, the 458-residue chain is Argininosuccinate lyase (458 aa).

Belongs to the lyase 1 family. Argininosuccinate lyase subfamily.

It is found in the cytoplasm. It carries out the reaction 2-(N(omega)-L-arginino)succinate = fumarate + L-arginine. The protein operates within amino-acid biosynthesis; L-arginine biosynthesis; L-arginine from L-ornithine and carbamoyl phosphate: step 3/3. In Acetivibrio thermocellus (strain ATCC 27405 / DSM 1237 / JCM 9322 / NBRC 103400 / NCIMB 10682 / NRRL B-4536 / VPI 7372) (Clostridium thermocellum), this protein is Argininosuccinate lyase.